We begin with the raw amino-acid sequence, 196 residues long: Signal peptidase complex catalytic subunit SEC11 (196 aa).

Topologically, residues 1–14 (MLSSLSPYMANPRQ) are cytoplasmic. A helical; Signal-anchor for type II membrane protein membrane pass occupies residues 15–33 (TFTQVLNFALVLSTAFMLW). Residues 34–196 (KGLSVYTNSA…MGLMVILQRE (163 aa)) are Lumenal-facing. Active-site charge relay system residues include Ser-53 and His-92. The interval 101–133 (VPGKDKTKKGGKQDVEASPSSLESQKLLTKGDN) is disordered. A compositionally biased stretch (polar residues) spans 118 to 133 (SPSSLESQKLLTKGDN). A glycan (N-linked (GlcNAc...) asparagine) is linked at Asn-134. Asp-138 acts as the Charge relay system in catalysis. The segment at 182–193 (VLLGFMGLMVIL) is C-terminal short (CTS) helix.

It belongs to the peptidase S26B family. In terms of assembly, component of the signal peptidase complex (SPC) composed of a catalytic subunit SEC11 and three accessory subunits SPC1, SPC2 and SPC3. The complex induces a local thinning of the ER membrane which is used to measure the length of the signal peptide (SP) h-region of protein substrates. This ensures the selectivity of the complex towards h-regions shorter than 18-20 amino acids. SPC associates with the translocon complex.

The protein resides in the endoplasmic reticulum membrane. The catalysed reaction is Cleavage of hydrophobic, N-terminal signal or leader sequences from secreted and periplasmic proteins.. In terms of biological role, catalytic component of the signal peptidase complex (SPC) which catalyzes the cleavage of N-terminal signal sequences from nascent proteins as they are translocated into the lumen of the endoplasmic reticulum. Specifically cleaves N-terminal signal peptides that contain a hydrophobic alpha-helix (h-region) shorter than 18-20 amino acids. This is Signal peptidase complex catalytic subunit SEC11 (SEC11) from Blastomyces gilchristii (strain SLH14081) (Blastomyces dermatitidis).